Consider the following 74-residue polypeptide: Conotoxin Vi15a (74 aa).

Positions Met1 to Gly19 are cleaved as a signal peptide. Positions Lys20–Val43 are excised as a propeptide. A Tryptophan amide modification is found at Trp72.

Post-translationally, contains four disulfide bonds. In terms of tissue distribution, expressed by the venom duct.

It is found in the secreted. The sequence is that of Conotoxin Vi15a from Conus virgo (Virgin cone).